A 408-amino-acid polypeptide reads, in one-letter code: Aminoacylase-1 (408 aa).

Position 80 (H80) interacts with Zn(2+). D82 is an active-site residue. Residue D113 participates in Zn(2+) binding. E147 (proton acceptor) is an active-site residue. Positions 148, 175, and 373 each coordinate Zn(2+).

The protein belongs to the peptidase M20A family. As to quaternary structure, homodimer. Interacts with SPHK1. Zn(2+) is required as a cofactor.

The protein localises to the cytoplasm. The catalysed reaction is an N-acyl-L-amino acid + H2O = an L-alpha-amino acid + a carboxylate. It catalyses the reaction N-acetyl-L-methionine + H2O = L-methionine + acetate. The enzyme catalyses N-acetyl-L-glutamine + H2O = L-glutamine + acetate. Its function is as follows. Catalyzes the hydrolysis of N-acetylated amino acids to acetate and free amino acids. The chain is Aminoacylase-1 (ACY1) from Pongo abelii (Sumatran orangutan).